A 190-amino-acid chain; its full sequence is MMMTMAADYGSSEGHYDTPWEFLARPNSVRFSTADVRLSTSAAGDAKVSPHGSPSLCSSSSFVNQLVQIGNSAVDARRKVPRDESKRRRPSDSEIYMEQNMNRVEAEKRLENRNLGDYLLRSRGEGSAALSLRATKGVVHIKIEWNGEKWVIGEGPLFRSISSAISFYRRHPLPIRGADHLVLKNQLKPV.

The SH2 domain occupies tyrosine 96–valine 190.

In terms of assembly, interacts with abl-1. Expressed in PQR, but not AQR, Q neuroblast descendents.

In terms of biological role, functions downstream of migratory protein mig-13 and may play a role in the control of Q neuroblast migration during larval development. The protein is Protein soem-1 of Caenorhabditis elegans.